The chain runs to 684 residues: Protein EXECUTER 1, chloroplastic (684 aa).

Over residues 1 to 31 (MPSLSTPPSQNLAFSPAASATSSRLTPSSKR) the composition is skewed to polar residues. A chloroplast-targeting transit peptide spans 1–46 (MPSLSTPPSQNLAFSPAASATSSRLTPSSKRSFYPHRLPDPTALCR). A disordered region spans residues 1 to 66 (MPSLSTPPSQ…SSSSSDDNPR (66 aa)). Over residues 48–61 (SSSSGSNSSSSSSS) the composition is skewed to low complexity. In terms of domain architecture, UVR spans 127–162 (DRLLSVLKSQLNRAIKREDYEDAARLKVAIAATATN). Residues 278-318 (TLTPGRFLTSPGRKEDTGNLAVESSEDEESDNSDDDSDLLE) form a disordered region. The segment covering 301-318 (SSEDEESDNSDDDSDLLE) has biased composition (acidic residues).

Its subcellular location is the plastid. It is found in the chloroplast. Together with EX2, enables higher plants to perceive singlet oxygen as a stress signal in plastid that activates a genetically determined nuclear stress response program which triggers a programmed cell death (PCD). This transfer of singlet oxygen-induced stress-related signals from the plastid to the nucleus that triggers genetically controlled PCD pathway is unique to photosynthetic eukaryotes and operates under mild stress conditions, impeding photosystem II (PSII) without causing photooxidative damage of the plant. In Arabidopsis thaliana (Mouse-ear cress), this protein is Protein EXECUTER 1, chloroplastic.